A 565-amino-acid chain; its full sequence is Potassium-transporting ATPase potassium-binding subunit (565 aa).

The next 12 helical transmembrane spans lie at 6–26, 63–83, 132–152, 175–195, 250–270, 283–303, 327–347, 354–374, 379–399, 418–438, 483–503, and 524–544; these read LMLLGLLILLLLILAPLLGSL, LLAILAFNLLGIVLLFALLMA, GLGVQNFLSAASGIAVLFALI, LYVLLPLSLLLSLLFVSQGVI, LSNLLQMVAIFLLPTALCFAF, LLWTMSLIFIVAAGCVMYAEL, FGILASALYAVVTTAASCGAV, FTALGGMVPMWLMQIGEVVFG, GLYGMLLFVLLTVFIAGLMIG, ALAILIPPALVLTGSAIALLC, LLLALVMLIGRFGVIIPVMAI, and GALFVSLLIGTILLVGALTFI.

Belongs to the KdpA family. In terms of assembly, the system is composed of three essential subunits: KdpA, KdpB and KdpC.

The protein localises to the cell inner membrane. Part of the high-affinity ATP-driven potassium transport (or Kdp) system, which catalyzes the hydrolysis of ATP coupled with the electrogenic transport of potassium into the cytoplasm. This subunit binds the periplasmic potassium ions and delivers the ions to the membrane domain of KdpB through an intramembrane tunnel. In Edwardsiella ictaluri (strain 93-146), this protein is Potassium-transporting ATPase potassium-binding subunit.